We begin with the raw amino-acid sequence, 652 residues long: ATP-dependent zinc metalloprotease FtsH (652 aa).

The Cytoplasmic segment spans residues 1-11 (MKKQNNGLIKN). Residues 12–32 (PFLWLLFIFFLVTGFQYFYSG) form a helical membrane-spanning segment. Over 33 to 131 (NNSGGSQQIN…EVTVKHESSS (99 aa)) the chain is Extracellular. The helical transmembrane segment at 132 to 152 (GIWINLLVSIVPFGILFFFLF) threads the bilayer. At 153–652 (SMMGNMGGGN…EVKSKMNDEK (500 aa)) the chain is on the cytoplasmic side. 227 to 234 (GPPGTGKT) is an ATP binding site. Residue H449 coordinates Zn(2+). E450 is an active-site residue. Zn(2+) contacts are provided by H453 and D525. A disordered region spans residues 628 to 652 (MPEAVEEESHALSYDEVKSKMNDEK). The segment covering 634-652 (EESHALSYDEVKSKMNDEK) has biased composition (basic and acidic residues).

This sequence in the central section; belongs to the AAA ATPase family. It in the C-terminal section; belongs to the peptidase M41 family. In terms of assembly, homohexamer. Zn(2+) serves as cofactor.

The protein resides in the cell membrane. Its function is as follows. Acts as a processive, ATP-dependent zinc metallopeptidase for both cytoplasmic and membrane proteins. Plays a role in the quality control of integral membrane proteins. This Streptococcus pneumoniae serotype 4 (strain ATCC BAA-334 / TIGR4) protein is ATP-dependent zinc metalloprotease FtsH.